The primary structure comprises 378 residues: uncharacterized protein (378 aa).

The next 11 helical transmembrane spans lie at 12 to 34, 44 to 66, 92 to 112, 132 to 154, 161 to 180, 200 to 222, 235 to 257, 267 to 285, 290 to 312, 327 to 349, and 356 to 373; these read SLAF…STFF, VKIY…IFLG, SIAL…LMLI, GFAS…IFLA, EVYA…SIIT, TFLL…IAMM, VEIY…FWGV, VFPL…LFFA, LIFV…RVYI, FLSL…FLFI, and LSAL…FIYL.

The protein localises to the cell membrane. This is an uncharacterized protein from Aquifex aeolicus (strain VF5).